The sequence spans 500 residues: Plexin domain-containing protein 1 (500 aa).

Positions 1–18 are cleaved as a signal peptide; it reads MRGELWLLVLVLREAARA. At 19-426 the chain is on the extracellular side; the sequence is LSPQPGAGHD…TKGTPVHLGT (408 aa). Disordered regions lie at residues 20 to 39 and 46 to 78; these read SPQP…AAKG and RRAR…DTLP. An O-linked (Xyl...) (chondroitin sulfate) serine glycan is attached at Ser33. Positions 47–60 are enriched in basic and acidic residues; that stretch reads RARESPGHVSEPDR. Residues Asn80 and Asn197 are each glycosylated (N-linked (GlcNAc...) asparagine). The segment at 359–379 is disordered; it reads FQDEDHDSASPDTSFSPYDGD. Residues 368 to 379 are compositionally biased toward polar residues; it reads SPDTSFSPYDGD. A helical membrane pass occupies residues 427-447; that stretch reads IVGIVLAVLLVAAIILAGIYI. Residues 448–500 lie on the Cytoplasmic side of the membrane; it reads NGHPTSNAALFFIERRPHHWPAMKFRSHPDHSTYAEVEPSGHEKEGFMEAEQC. Residues 479–494 are compositionally biased toward basic and acidic residues; that stretch reads STYAEVEPSGHEKEGF. The interval 479-500 is disordered; sequence STYAEVEPSGHEKEGFMEAEQC.

This sequence belongs to the plexin family. As to quaternary structure, interacts with NID1. May interact with CTTN. N-glycosylated. In terms of tissue distribution, detected in urine (at protein level). Detected in endothelial cells from colorectal cancer, and in endothelial cells from primary cancers of the lung, liver, pancreas, breast and brain. Not detectable in endothelial cells from normal tissue. Expressed in fibrovascular membrane with increased expression in individuals with proliferative diabetic retinopathy.

Its subcellular location is the secreted. It localises to the cell membrane. The protein localises to the cell junction. It is found in the tight junction. The protein resides in the cytoplasm. Functionally, plays a critical role in endothelial cell capillary morphogenesis. This chain is Plexin domain-containing protein 1 (PLXDC1), found in Homo sapiens (Human).